The primary structure comprises 114 residues: Small ribosomal subunit protein eS25 (114 aa).

The disordered stretch occupies residues 1 to 33; that stretch reads MAPKKDKAPPPSSKPAKSGGKQKKKKWSKGKQK. Positions 20 to 30 are enriched in basic residues; the sequence is GKQKKKKWSKG.

This sequence belongs to the eukaryotic ribosomal protein eS25 family.

In Amaranthus cruentus (Purple amaranth), this protein is Small ribosomal subunit protein eS25 (RPS25).